The following is a 264-amino-acid chain: Thymidylate synthase (264 aa).

R21 lines the dUMP pocket. (6R)-5,10-methylene-5,6,7,8-tetrahydrofolate is bound at residue H51. 126–127 (RR) contacts dUMP. The active-site Nucleophile is the C146. DUMP is bound by residues 166–169 (RSAD), N177, and 207–209 (HLY). D169 provides a ligand contact to (6R)-5,10-methylene-5,6,7,8-tetrahydrofolate. A263 is a (6R)-5,10-methylene-5,6,7,8-tetrahydrofolate binding site.

Belongs to the thymidylate synthase family. Bacterial-type ThyA subfamily. Homodimer.

The protein localises to the cytoplasm. It catalyses the reaction dUMP + (6R)-5,10-methylene-5,6,7,8-tetrahydrofolate = 7,8-dihydrofolate + dTMP. The protein operates within pyrimidine metabolism; dTTP biosynthesis. Functionally, catalyzes the reductive methylation of 2'-deoxyuridine-5'-monophosphate (dUMP) to 2'-deoxythymidine-5'-monophosphate (dTMP) while utilizing 5,10-methylenetetrahydrofolate (mTHF) as the methyl donor and reductant in the reaction, yielding dihydrofolate (DHF) as a by-product. This enzymatic reaction provides an intracellular de novo source of dTMP, an essential precursor for DNA biosynthesis. The sequence is that of Thymidylate synthase from Bartonella tribocorum (strain CIP 105476 / IBS 506).